Reading from the N-terminus, the 96-residue chain is Co-chaperonin GroES (96 aa).

This sequence belongs to the GroES chaperonin family. In terms of assembly, heptamer of 7 subunits arranged in a ring. Interacts with the chaperonin GroEL.

It is found in the cytoplasm. Functionally, together with the chaperonin GroEL, plays an essential role in assisting protein folding. The GroEL-GroES system forms a nano-cage that allows encapsulation of the non-native substrate proteins and provides a physical environment optimized to promote and accelerate protein folding. GroES binds to the apical surface of the GroEL ring, thereby capping the opening of the GroEL channel. The sequence is that of Co-chaperonin GroES from Neisseria gonorrhoeae (strain ATCC 700825 / FA 1090).